The sequence spans 80 residues: uncharacterized protein (80 aa).

To M.leprae U650M.

This is an uncharacterized protein from Mycobacterium bovis (strain ATCC BAA-935 / AF2122/97).